The chain runs to 452 residues: Bifunctional protein GlmU (452 aa).

A pyrophosphorylase region spans residues 1–225 (MEVVILAAGQ…VSETLGVNSK (225 aa)). Residues 6-9 (LAAG), Lys20, Gln71, 76-77 (GT), 98-100 (YGD), Gly135, Glu150, Asn165, and Asn223 contribute to the UDP-N-acetyl-alpha-D-glucosamine site. Position 100 (Asp100) interacts with Mg(2+). Asn223 is a Mg(2+) binding site. A linker region spans residues 226-246 (PQLAELERIHQRNIAQRLMED). The interval 247-452 (GVTLIDPARI…AGWKRPVKQR (206 aa)) is N-acetyltransferase. UDP-N-acetyl-alpha-D-glucosamine is bound by residues Arg329 and Lys347. His359 acts as the Proton acceptor in catalysis. UDP-N-acetyl-alpha-D-glucosamine-binding residues include Tyr362 and Asn373. Acetyl-CoA contacts are provided by residues Ala376, 382–383 (NY), Ser401, Ala419, and Arg436.

The protein in the N-terminal section; belongs to the N-acetylglucosamine-1-phosphate uridyltransferase family. It in the C-terminal section; belongs to the transferase hexapeptide repeat family. As to quaternary structure, homotrimer. It depends on Mg(2+) as a cofactor.

Its subcellular location is the cytoplasm. The enzyme catalyses alpha-D-glucosamine 1-phosphate + acetyl-CoA = N-acetyl-alpha-D-glucosamine 1-phosphate + CoA + H(+). The catalysed reaction is N-acetyl-alpha-D-glucosamine 1-phosphate + UTP + H(+) = UDP-N-acetyl-alpha-D-glucosamine + diphosphate. It participates in nucleotide-sugar biosynthesis; UDP-N-acetyl-alpha-D-glucosamine biosynthesis; N-acetyl-alpha-D-glucosamine 1-phosphate from alpha-D-glucosamine 6-phosphate (route II): step 2/2. It functions in the pathway nucleotide-sugar biosynthesis; UDP-N-acetyl-alpha-D-glucosamine biosynthesis; UDP-N-acetyl-alpha-D-glucosamine from N-acetyl-alpha-D-glucosamine 1-phosphate: step 1/1. The protein operates within bacterial outer membrane biogenesis; LPS lipid A biosynthesis. Functionally, catalyzes the last two sequential reactions in the de novo biosynthetic pathway for UDP-N-acetylglucosamine (UDP-GlcNAc). The C-terminal domain catalyzes the transfer of acetyl group from acetyl coenzyme A to glucosamine-1-phosphate (GlcN-1-P) to produce N-acetylglucosamine-1-phosphate (GlcNAc-1-P), which is converted into UDP-GlcNAc by the transfer of uridine 5-monophosphate (from uridine 5-triphosphate), a reaction catalyzed by the N-terminal domain. The protein is Bifunctional protein GlmU of Azoarcus sp. (strain BH72).